Here is a 418-residue protein sequence, read N- to C-terminus: Putative ion-transport protein YfeO (418 aa).

The next 12 membrane-spanning stretches (helical) occupy residues 10–30 (LLLS…LIMV), 54–74 (DSPL…GLVI), 99–119 (ALPG…SLGP), 120–140 (EHPI…RLLP), 149–169 (ILAS…AALI), 186–206 (LFAP…FFHP), 223–243 (ILSG…AVWC), 258–278 (VFVL…GGPV), 300–320 (DYFL…ASGF), 322–342 (GGRI…LHEH), 343–363 (VPAV…VLVV), and 371–391 (LFMA…CIVM).

Belongs to the chloride channel (TC 2.A.49) family.

The protein resides in the cell membrane. The protein is Putative ion-transport protein YfeO of Escherichia coli O127:H6 (strain E2348/69 / EPEC).